The primary structure comprises 250 residues: Ribosomal RNA small subunit methyltransferase J (250 aa).

S-adenosyl-L-methionine is bound by residues 101–102 (RD), 117–118 (ER), 153–154 (SS), and Asp171.

Belongs to the methyltransferase superfamily. RsmJ family.

It localises to the cytoplasm. The catalysed reaction is guanosine(1516) in 16S rRNA + S-adenosyl-L-methionine = N(2)-methylguanosine(1516) in 16S rRNA + S-adenosyl-L-homocysteine + H(+). Functionally, specifically methylates the guanosine in position 1516 of 16S rRNA. The chain is Ribosomal RNA small subunit methyltransferase J from Escherichia fergusonii (strain ATCC 35469 / DSM 13698 / CCUG 18766 / IAM 14443 / JCM 21226 / LMG 7866 / NBRC 102419 / NCTC 12128 / CDC 0568-73).